Consider the following 454-residue polypeptide: tRNA(Ile)-lysidine synthase (454 aa).

27-32 (SGGSDS) is an ATP binding site.

The protein belongs to the tRNA(Ile)-lysidine synthase family.

It is found in the cytoplasm. The enzyme catalyses cytidine(34) in tRNA(Ile2) + L-lysine + ATP = lysidine(34) in tRNA(Ile2) + AMP + diphosphate + H(+). In terms of biological role, ligates lysine onto the cytidine present at position 34 of the AUA codon-specific tRNA(Ile) that contains the anticodon CAU, in an ATP-dependent manner. Cytidine is converted to lysidine, thus changing the amino acid specificity of the tRNA from methionine to isoleucine. The polypeptide is tRNA(Ile)-lysidine synthase (Mesorhizobium japonicum (strain LMG 29417 / CECT 9101 / MAFF 303099) (Mesorhizobium loti (strain MAFF 303099))).